Here is a 413-residue protein sequence, read N- to C-terminus: Multifunctional CCA protein (413 aa).

Positions 8 and 11 each coordinate ATP. CTP-binding residues include G8 and R11. Residues D21 and D23 each coordinate Mg(2+). R91, R137, and R140 together coordinate ATP. Residues R91, R137, and R140 each coordinate CTP. Residues 228 to 329 enclose the HD domain; the sequence is TGIHTLMTLS…VKLFDSIDAW (102 aa).

This sequence belongs to the tRNA nucleotidyltransferase/poly(A) polymerase family. Bacterial CCA-adding enzyme type 1 subfamily. As to quaternary structure, monomer. Can also form homodimers and oligomers. Mg(2+) serves as cofactor. Requires Ni(2+) as cofactor.

The catalysed reaction is a tRNA precursor + 2 CTP + ATP = a tRNA with a 3' CCA end + 3 diphosphate. It carries out the reaction a tRNA with a 3' CCA end + 2 CTP + ATP = a tRNA with a 3' CCACCA end + 3 diphosphate. Catalyzes the addition and repair of the essential 3'-terminal CCA sequence in tRNAs without using a nucleic acid template. Adds these three nucleotides in the order of C, C, and A to the tRNA nucleotide-73, using CTP and ATP as substrates and producing inorganic pyrophosphate. tRNA 3'-terminal CCA addition is required both for tRNA processing and repair. Also involved in tRNA surveillance by mediating tandem CCA addition to generate a CCACCA at the 3' terminus of unstable tRNAs. While stable tRNAs receive only 3'-terminal CCA, unstable tRNAs are marked with CCACCA and rapidly degraded. This is Multifunctional CCA protein from Citrobacter koseri (strain ATCC BAA-895 / CDC 4225-83 / SGSC4696).